The sequence spans 411 residues: MGTLRAILKNPDDLYPLIKLKLAARHAEKQIPPEPHWGFCYLMLQKVSRSFALVIQQLPVELRDAVCIFYLVLRALDTVEDDTSIPTDVKVPILISFHQHVYDREWHFACGTKEYKVLMDQFHHVSTAFLELGKLYQQAIEDITMRMGAGMAKFICKEVETTDDYDEYCHYVAGLVGLGLSKLFHASGKEDLASDSLSNSMGLFLQKTNIIRDYLEDINEVPKCRMFWPREIWSKYVNKLEDLKYEENSVKAVQCLNDMVTNALSHVEDCLTYMFNLHDPAIFRFCAIPQVMAIGTLAMCYDNIEVFRGVVKMRRGLTAKVIDRTKTMADVYGAFFDFSCMLKSKVNNNDPNATKTLKRLDAILKTCRDSGTLNKRKSYIIRNEPNYSPVLIVVIFIILAIILAQLFGSRS.

Arginine 49 and arginine 74 together coordinate NADP(+). 3 residues coordinate Mg(2+): aspartate 77, glutamate 80, and aspartate 81. NADP(+) contacts are provided by arginine 212, lysine 312, and arginine 314. Residues 388–408 traverse the membrane as a helical segment; it reads SPVLIVVIFIILAIILAQLFG.

Belongs to the phytoene/squalene synthase family. Requires Mg(2+) as cofactor.

It localises to the membrane. The catalysed reaction is 2 (2E,6E)-farnesyl diphosphate + NADH + H(+) = squalene + 2 diphosphate + NAD(+). It carries out the reaction 2 (2E,6E)-farnesyl diphosphate + NADPH + H(+) = squalene + 2 diphosphate + NADP(+). Functionally, converts farnesyl diphosphate (FPP) into squalene, a precursor for sterol biosynthesis in eukaryotes. The polypeptide is Squalene synthase (Solanum lycopersicum (Tomato)).